The following is a 92-amino-acid chain: Subtilisin inhibitor 1 (92 aa).

A compositionally biased stretch (polar residues) spans 1–12 (QEQGTNPSQEQN). Positions 1-31 (QEQGTNPSQEQNVPLPRNYKQALETNTPTKT) are disordered.

The protein belongs to the protease inhibitor I13 (potato type I serine protease inhibitor) family.

Inhibitor of subtilisin. The chain is Subtilisin inhibitor 1 from Phaseolus angularis (Azuki bean).